Here is a 314-residue protein sequence, read N- to C-terminus: Olfactory receptor 14A2 (314 aa).

The Extracellular segment spans residues 1–26 (MANVTLVTGFLLMGFSNIQKLRILYG). N-linked (GlcNAc...) asparagine glycosylation occurs at Asn-3. The chain crosses the membrane as a helical span at residues 27 to 47 (VLFLLIYLAALMSNLLIITLI). Over 48-55 (TLDVKLQT) the chain is Cytoplasmic. Residues 56 to 76 (PMYFFLKNLSFLDVFLVSVPI) traverse the membrane as a helical segment. The Extracellular segment spans residues 77–91 (PKFIVNNLTHNNSIS). A glycan (N-linked (GlcNAc...) asparagine) is linked at Asn-83. A helical membrane pass occupies residues 92–112 (ILGCAFQLLLMTSFSAGEIFI). Cys-95 and Cys-177 are disulfide-bonded. The Cytoplasmic segment spans residues 113-136 (LTAMSYDRYVAICCPLNYEVIMNT). A helical membrane pass occupies residues 137–157 (GVCVLMASVSWAIGGLFGTAY). Residues 158-193 (TAGTFSMPFCGSSVIPQFFCDVPSLLRISCSETLMV) are Extracellular-facing. A helical membrane pass occupies residues 194–214 (IYAGIGVGACLSISCFICIVI). The Cytoplasmic portion of the chain corresponds to 215-237 (SYIYIFSTVLKIPTTKGQSKAFS). Residues 238–258 (TCFPHLTVFTVFIITAYFVYL) form a helical membrane-spanning segment. Residues 259–267 (KPPSNSPSV) are Extracellular-facing. The chain crosses the membrane as a helical span at residues 268-290 (IDRLLSVIYTVMPPVFNPVTYSL). At 291–314 (RNNDMKCALIRLLQKTYGQEAYFI) the chain is on the cytoplasmic side.

Belongs to the G-protein coupled receptor 1 family.

It localises to the cell membrane. In terms of biological role, odorant receptor. The polypeptide is Olfactory receptor 14A2 (OR14A2) (Homo sapiens (Human)).